The primary structure comprises 178 residues: ATP synthase subunit delta (178 aa).

It belongs to the ATPase delta chain family. F-type ATPases have 2 components, F(1) - the catalytic core - and F(0) - the membrane proton channel. F(1) has five subunits: alpha(3), beta(3), gamma(1), delta(1), epsilon(1). F(0) has three main subunits: a(1), b(2) and c(10-14). The alpha and beta chains form an alternating ring which encloses part of the gamma chain. F(1) is attached to F(0) by a central stalk formed by the gamma and epsilon chains, while a peripheral stalk is formed by the delta and b chains.

It localises to the cell inner membrane. Its function is as follows. F(1)F(0) ATP synthase produces ATP from ADP in the presence of a proton or sodium gradient. F-type ATPases consist of two structural domains, F(1) containing the extramembraneous catalytic core and F(0) containing the membrane proton channel, linked together by a central stalk and a peripheral stalk. During catalysis, ATP synthesis in the catalytic domain of F(1) is coupled via a rotary mechanism of the central stalk subunits to proton translocation. In terms of biological role, this protein is part of the stalk that links CF(0) to CF(1). It either transmits conformational changes from CF(0) to CF(1) or is implicated in proton conduction. The chain is ATP synthase subunit delta from Nitrosococcus oceani (strain ATCC 19707 / BCRC 17464 / JCM 30415 / NCIMB 11848 / C-107).